The chain runs to 407 residues: tRNA-specific 2-thiouridylase MnmA (407 aa).

ATP contacts are provided by residues 20–27 (AMSGGVDS) and Leu46. Cys114 functions as the Nucleophile in the catalytic mechanism. Cysteines 114 and 210 form a disulfide. Gly138 lines the ATP pocket. The interval 160 to 162 (RDQ) is interaction with tRNA. The active-site Cysteine persulfide intermediate is the Cys210.

Belongs to the MnmA/TRMU family.

It is found in the cytoplasm. It catalyses the reaction S-sulfanyl-L-cysteinyl-[protein] + uridine(34) in tRNA + AH2 + ATP = 2-thiouridine(34) in tRNA + L-cysteinyl-[protein] + A + AMP + diphosphate + H(+). Catalyzes the 2-thiolation of uridine at the wobble position (U34) of tRNA, leading to the formation of s(2)U34. This Bartonella tribocorum (strain CIP 105476 / IBS 506) protein is tRNA-specific 2-thiouridylase MnmA.